The chain runs to 338 residues: Pyridoxal 5'-phosphate synthase subunit PdxS (338 aa).

D66 contributes to the D-ribose 5-phosphate binding site. K123 functions as the Schiff-base intermediate with D-ribose 5-phosphate in the catalytic mechanism. D-ribose 5-phosphate is bound at residue G195. K207 provides a ligand contact to D-glyceraldehyde 3-phosphate. Residues G256 and 277–278 contribute to the D-ribose 5-phosphate site; that span reads GS.

It belongs to the PdxS/SNZ family. As to quaternary structure, in the presence of PdxT, forms a dodecamer of heterodimers.

It carries out the reaction aldehydo-D-ribose 5-phosphate + D-glyceraldehyde 3-phosphate + L-glutamine = pyridoxal 5'-phosphate + L-glutamate + phosphate + 3 H2O + H(+). It functions in the pathway cofactor biosynthesis; pyridoxal 5'-phosphate biosynthesis. Its function is as follows. Catalyzes the formation of pyridoxal 5'-phosphate from ribose 5-phosphate (RBP), glyceraldehyde 3-phosphate (G3P) and ammonia. The ammonia is provided by the PdxT subunit. Can also use ribulose 5-phosphate and dihydroxyacetone phosphate as substrates, resulting from enzyme-catalyzed isomerization of RBP and G3P, respectively. This chain is Pyridoxal 5'-phosphate synthase subunit PdxS, found in Saccharolobus islandicus (strain L.S.2.15 / Lassen #1) (Sulfolobus islandicus).